Consider the following 131-residue polypeptide: Sperm microtubule inner protein 11 (131 aa).

The tract at residues 18–44 is disordered; it reads KKRNTTEETNQKEPEPTRLPPIISKDG. Residues 21 to 33 are compositionally biased toward basic and acidic residues; that stretch reads NTTEETNQKEPEP.

In terms of assembly, microtubule inner protein component of sperm flagellar doublet microtubules.

It localises to the cytoplasm. The protein resides in the cytoskeleton. The protein localises to the flagellum axoneme. Its function is as follows. Microtubule inner protein (MIP) part of the dynein-decorated doublet microtubules (DMTs) in flagellum axoneme. May serve to reinforce and thus stabilize the microtubule structure in the sperm flagella. The protein is Sperm microtubule inner protein 11 of Homo sapiens (Human).